The sequence spans 384 residues: S-adenosylmethionine synthase (384 aa).

His15 contributes to the ATP binding site. Asp17 serves as a coordination point for Mg(2+). Residue Glu43 participates in K(+) binding. L-methionine is bound by residues Glu56 and Gln99. The flexible loop stretch occupies residues 99–109 (QSPDINQGVDR). Residues 164-166 (DAK), 230-231 (RF), Asp239, 245-246 (RK), Ala262, and Lys266 each bind ATP. Residue Asp239 coordinates L-methionine. Lys270 contacts L-methionine.

Belongs to the AdoMet synthase family. Homotetramer; dimer of dimers. Mg(2+) serves as cofactor. K(+) is required as a cofactor.

The protein resides in the cytoplasm. The catalysed reaction is L-methionine + ATP + H2O = S-adenosyl-L-methionine + phosphate + diphosphate. It functions in the pathway amino-acid biosynthesis; S-adenosyl-L-methionine biosynthesis; S-adenosyl-L-methionine from L-methionine: step 1/1. Functionally, catalyzes the formation of S-adenosylmethionine (AdoMet) from methionine and ATP. The overall synthetic reaction is composed of two sequential steps, AdoMet formation and the subsequent tripolyphosphate hydrolysis which occurs prior to release of AdoMet from the enzyme. The polypeptide is S-adenosylmethionine synthase (Enterobacter sp. (strain 638)).